The following is a 651-amino-acid chain: Acetyl-coenzyme A synthetase (651 aa).

Residues 190-193 (RGGK), threonine 312, and asparagine 336 contribute to the CoA site. ATP-binding positions include 388–390 (GEP), 412–417 (DTWWQT), aspartate 501, and arginine 516. Serine 524 lines the CoA pocket. Arginine 527 is a binding site for ATP. Mg(2+) is bound by residues valine 538, histidine 540, and valine 543. CoA is bound at residue arginine 585. Position 610 is an N6-acetyllysine (lysine 610).

It belongs to the ATP-dependent AMP-binding enzyme family. Mg(2+) serves as cofactor. Acetylated. Deacetylation by the SIR2-homolog deacetylase activates the enzyme.

It carries out the reaction acetate + ATP + CoA = acetyl-CoA + AMP + diphosphate. Catalyzes the conversion of acetate into acetyl-CoA (AcCoA), an essential intermediate at the junction of anabolic and catabolic pathways. AcsA undergoes a two-step reaction. In the first half reaction, AcsA combines acetate with ATP to form acetyl-adenylate (AcAMP) intermediate. In the second half reaction, it can then transfer the acetyl group from AcAMP to the sulfhydryl group of CoA, forming the product AcCoA. This is Acetyl-coenzyme A synthetase from Mesorhizobium japonicum (strain LMG 29417 / CECT 9101 / MAFF 303099) (Mesorhizobium loti (strain MAFF 303099)).